A 56-amino-acid chain; its full sequence is Large ribosomal subunit protein bL33 (56 aa).

It belongs to the bacterial ribosomal protein bL33 family.

This is Large ribosomal subunit protein bL33 from Tropheryma whipplei (strain TW08/27) (Whipple's bacillus).